The sequence spans 401 residues: Nicotinate phosphoribosyltransferase (401 aa).

Phosphohistidine; by autocatalysis is present on His221.

Belongs to the NAPRTase family. Transiently phosphorylated on a His residue during the reaction cycle. Phosphorylation strongly increases the affinity for substrates and increases the rate of nicotinate D-ribonucleotide production. Dephosphorylation regenerates the low-affinity form of the enzyme, leading to product release.

The enzyme catalyses nicotinate + 5-phospho-alpha-D-ribose 1-diphosphate + ATP + H2O = nicotinate beta-D-ribonucleotide + ADP + phosphate + diphosphate. The protein operates within cofactor biosynthesis; NAD(+) biosynthesis; nicotinate D-ribonucleotide from nicotinate: step 1/1. Catalyzes the synthesis of beta-nicotinate D-ribonucleotide from nicotinate and 5-phospho-D-ribose 1-phosphate at the expense of ATP. The polypeptide is Nicotinate phosphoribosyltransferase (Yersinia pseudotuberculosis serotype O:1b (strain IP 31758)).